The chain runs to 454 residues: Cobyrinate a,c-diamide synthase (454 aa).

A GATase cobBQ-type domain is found at 247 to 442 (KIGIAMDSAF…IHAHWASNPN (196 aa)). Cys-329 acts as the Nucleophile in catalysis.

This sequence belongs to the CobB/CbiA family. Mg(2+) serves as cofactor.

It catalyses the reaction cob(II)yrinate + 2 L-glutamine + 2 ATP + 2 H2O = cob(II)yrinate a,c diamide + 2 L-glutamate + 2 ADP + 2 phosphate + 2 H(+). Its pathway is cofactor biosynthesis; adenosylcobalamin biosynthesis; cob(II)yrinate a,c-diamide from sirohydrochlorin (anaerobic route): step 10/10. In terms of biological role, catalyzes the ATP-dependent amidation of the two carboxylate groups at positions a and c of cobyrinate, using either L-glutamine or ammonia as the nitrogen source. This is Cobyrinate a,c-diamide synthase from Leptospira interrogans serogroup Icterohaemorrhagiae serovar Lai (strain 56601).